A 257-amino-acid polypeptide reads, in one-letter code: 2,3,4,5-tetrahydropyridine-2,6-dicarboxylate N-acetyltransferase (257 aa).

This sequence belongs to the transferase hexapeptide repeat family. DapH subfamily.

It carries out the reaction (S)-2,3,4,5-tetrahydrodipicolinate + acetyl-CoA + H2O = L-2-acetamido-6-oxoheptanedioate + CoA. It participates in amino-acid biosynthesis; L-lysine biosynthesis via DAP pathway; LL-2,6-diaminopimelate from (S)-tetrahydrodipicolinate (acetylase route): step 1/3. Its function is as follows. Catalyzes the transfer of an acetyl group from acetyl-CoA to tetrahydrodipicolinate. The protein is 2,3,4,5-tetrahydropyridine-2,6-dicarboxylate N-acetyltransferase of Lactococcus lactis subsp. cremoris (strain SK11).